Reading from the N-terminus, the 183-residue chain is Photosystem II extrinsic protein V (183 aa).

Residues 1–31 (MTFGHCRRASTLRSAFVLGLCGLLLAGCSGA) form the signal peptide. 4 residues coordinate heme c: Cys84, Cys87, His88, and Cys138.

This sequence belongs to the cytochrome c family. PsbV subfamily. In terms of assembly, PSII is composed of 1 copy each of membrane proteins PsbA, PsbB, PsbC, PsbD, PsbE, PsbF, PsbH, PsbI, PsbJ, PsbK, PsbL, PsbM, PsbT, PsbX, Psb30/Ycf12, peripheral proteins PsbO, CyanoQ (PsbQ), PsbU, PsbV and a large number of cofactors. It forms dimeric complexes. Requires heme c as cofactor.

The protein localises to the cell inner membrane. Its function is as follows. Probably one of the extrinsic, lumenal subunits of photosystem II (PSII). PSII is a light-driven water plastoquinone oxidoreductase, using light energy to abstract electrons from H(2)O, generating a proton gradient subsequently used for ATP formation. The extrinsic proteins stabilize the structure of photosystem II oxygen-evolving complex (OEC), the ion environment of oxygen evolution and protect the OEC against heat-induced inactivation. Low-potential cytochrome c that plays a role in the OEC of PSII. The protein is Photosystem II extrinsic protein V (psbV1) of Gloeobacter violaceus (strain ATCC 29082 / PCC 7421).